Here is a 371-residue protein sequence, read N- to C-terminus: Cytochrome b (371 aa).

Helical transmembrane passes span 25–45 (FGSMLLTCLALQVLTGFFLAV), 69–90 (WMMQNLHAIGASMFFICIYIHI), 105–125 (WMSGITLLITLMATAFFGYVL), and 170–190 (FFALHFILPFAIISLSSLHII). Heme b-binding residues include H75 and H89. Residues H174 and H188 each coordinate heme b. H193 contacts a ubiquinone. 4 helical membrane-spanning segments follow: residues 218–238 (HKDLLLLTLMILLLLIIVSFS), 280–300 (LGGALALVMSIMILFTIPFTH), 312–332 (LSQLMFWALISTFVTITWAAT), and 339–358 (FIIISQVTSTLYFTFFLSIP).

The protein belongs to the cytochrome b family. As to quaternary structure, the cytochrome bc1 complex contains 3 respiratory subunits (MT-CYB, CYC1 and UQCRFS1), 2 core proteins (UQCRC1 and UQCRC2) and probably 6 low-molecular weight proteins. Heme b is required as a cofactor.

Its subcellular location is the mitochondrion inner membrane. Component of the ubiquinol-cytochrome c reductase complex (complex III or cytochrome b-c1 complex) that is part of the mitochondrial respiratory chain. The b-c1 complex mediates electron transfer from ubiquinol to cytochrome c. Contributes to the generation of a proton gradient across the mitochondrial membrane that is then used for ATP synthesis. The sequence is that of Cytochrome b (MT-CYB) from Antaresia childreni (Children's python).